A 306-amino-acid polypeptide reads, in one-letter code: Leucotoxin LukEv (306 aa).

Positions 1-23 (MLAATLSVGLIAPLASPIQESRA) are cleaved as a signal peptide.

This sequence belongs to the aerolysin family. Toxicity requires sequential binding and synergistic association of a class S and a class F component which form heterooligomeric complexes. LukEv (class S) associates with LukDv (class F).

Its subcellular location is the secreted. Part of a bi-component leucotoxin that acts by forming pores in the membrane of the target cells. The activity of LukEv-LukDv to rabbit leukocytes is similar to that of the Panton-Valentine leucocidin (PVL). LukEv-LukDv is hemolytic to rabbit red blood cells although the activity is only 8% of gamma-hemolysin. This chain is Leucotoxin LukEv (lukEv), found in Staphylococcus aureus (strain NCTC 8325 / PS 47).